Here is a 728-residue protein sequence, read N- to C-terminus: Catalase B (728 aa).

Residues 1–15 (MRLTFIPSLIGVANA) form the signal peptide. A propeptide spanning residues 16–27 (VCPYMTGELNRR) is cleaved from the precursor. His102 is an active-site residue. Asn120 carries N-linked (GlcNAc...) asparagine glycosylation. Asn175 is a catalytic residue. Residue Tyr389 participates in heme binding. N-linked (GlcNAc...) asparagine glycosylation is found at Asn448 and Asn551.

Belongs to the catalase family. As to quaternary structure, homotetramer. The cofactor is heme. In terms of processing, N-glycosylated.

Its subcellular location is the secreted. The enzyme catalyses 2 H2O2 = O2 + 2 H2O. In terms of biological role, occurs in almost all aerobically respiring organisms and serves to protect cells from the toxic effects of hydrogen peroxide. The sequence is that of Catalase B (catB) from Aspergillus fumigatus (strain ATCC MYA-4609 / CBS 101355 / FGSC A1100 / Af293) (Neosartorya fumigata).